We begin with the raw amino-acid sequence, 204 residues long: Dof zinc finger protein DOF3.1 (204 aa).

Positions 1–25 are disordered; it reads MQDPAAYYQTMMAKQQQQQQPQFAE. The segment at 29 to 83 adopts a Dof-type zinc-finger fold; the sequence is LKCPRCDSPNTKFCYYNNYNLSQPRHFCKSCRRYWTKGGALRNVPVGGGSRKNAT. C31, C34, C56, and C59 together coordinate Zn(2+). Disordered stretches follow at residues 70–128 and 182–204; these read RNVP…TRML and RTEPGNNNNNPWTDLAMNRAEKN. The segment covering 84-102 has biased composition (low complexity); sequence KRSTSSSSSASSPSNSSQN. Residues 106 to 124 are compositionally biased toward basic and acidic residues; the sequence is KNPDPDPDPRNSQKPDLDP.

Its subcellular location is the nucleus. Transcription factor that binds specifically to a 5'-AA[AG]G-3' consensus core sequence. The polypeptide is Dof zinc finger protein DOF3.1 (DOF3.1) (Arabidopsis thaliana (Mouse-ear cress)).